A 311-amino-acid chain; its full sequence is Ribosomal RNA small subunit methyltransferase H (311 aa).

S-adenosyl-L-methionine contacts are provided by residues 32 to 34 (AGH), Asp52, Phe79, Asp100, and Gln107.

It belongs to the methyltransferase superfamily. RsmH family.

It is found in the cytoplasm. It carries out the reaction cytidine(1402) in 16S rRNA + S-adenosyl-L-methionine = N(4)-methylcytidine(1402) in 16S rRNA + S-adenosyl-L-homocysteine + H(+). Functionally, specifically methylates the N4 position of cytidine in position 1402 (C1402) of 16S rRNA. This Staphylococcus aureus (strain Mu3 / ATCC 700698) protein is Ribosomal RNA small subunit methyltransferase H.